The primary structure comprises 122 residues: Small ribosomal subunit protein uS13 (122 aa).

The segment at 95–122 (GLPVRGQRTHTNARTRKGPAKPIAGKKK) is disordered.

This sequence belongs to the universal ribosomal protein uS13 family. As to quaternary structure, part of the 30S ribosomal subunit. Forms a loose heterodimer with protein S19. Forms two bridges to the 50S subunit in the 70S ribosome.

Located at the top of the head of the 30S subunit, it contacts several helices of the 16S rRNA. In the 70S ribosome it contacts the 23S rRNA (bridge B1a) and protein L5 of the 50S subunit (bridge B1b), connecting the 2 subunits; these bridges are implicated in subunit movement. Contacts the tRNAs in the A and P-sites. The chain is Small ribosomal subunit protein uS13 from Caulobacter sp. (strain K31).